A 1270-amino-acid polypeptide reads, in one-letter code: Microtubule-associated tumor suppressor 1 (1270 aa).

Positions 1 to 14 (MTDDNSDDKIEDEL) are enriched in acidic residues. Disordered stretches follow at residues 1-50 (MTDD…NSAN) and 184-236 (FHTA…VTPS). Positions 38-50 (NSSASSVNWNSAN) are enriched in low complexity. Thr186 carries the post-translational modification Phosphothreonine. Positions 197–211 (SGSTSSLSYSTWTSS) are enriched in low complexity. The span at 212–228 (HSDKTHARETTYDRESF) shows a compositional bias: basic and acidic residues. Ser381, Ser399, and Ser443 each carry phosphoserine. Disordered regions lie at residues 524–560 (DAALSKVTPRPQQTSASSPSSVNSRQQTVLSRTPRSD) and 592–622 (THSKNASHRVPRTTSAVKSNQEDVDKASSSN). The segment covering 533–556 (RPQQTSASSPSSVNSRQQTVLSRT) has biased composition (polar residues). Ser629 is subject to Phosphoserine. Polar residues-rich tracts occupy residues 701 to 710 (SKTTTTSGRN), 759 to 776 (VSSSGKPTSLKTAQSSWV), and 797 to 815 (TGSTPSIASTHSELSTYSN). The segment at 701 to 815 (SKTTTTSGRN…THSELSTYSN (115 aa)) is disordered. A coiled-coil region spans residues 940-1231 (IQHLLSEREE…RLSMENEELL (292 aa)). 8 positions are modified to phosphoserine: Ser1203, Ser1224, Ser1245, Ser1255, Ser1259, Ser1261, Ser1264, and Ser1268. The tract at residues 1237-1270 (GDLCSPKRSPTSSAIPLQSPRNSGSFPSPSISPR) is disordered. Polar residues predominate over residues 1244–1270 (RSPTSSAIPLQSPRNSGSFPSPSISPR).

This sequence belongs to the MTUS1 family. As to quaternary structure, homodimer. Interacts with AGTR2. Interacts with PTPN6. Isoform 1 associates with microtubules. Ubiquitously expressed (at protein level). Highly expressed in brain. Down-regulated in ovarian carcinoma, pancreas carcinoma, colon carcinoma and head and neck squamous cell carcinoma (HNSCC). Isoform 1 is the major isoform in most peripheral tissues. Isoform 2 is abundant in most peripheral tissues. Isoform 3 is the major isoform in brain, female reproductive tissues, thyroid and heart. Within brain it is highly expressed in corpus callosum and pons. Isoform 6 is brain-specific, it is the major isoform in cerebellum and fetal brain.

It localises to the mitochondrion. The protein resides in the golgi apparatus. The protein localises to the cell membrane. It is found in the nucleus. Its subcellular location is the cytoplasm. It localises to the cytoskeleton. The protein resides in the microtubule organizing center. The protein localises to the centrosome. It is found in the spindle. Cooperates with AGTR2 to inhibit ERK2 activation and cell proliferation. May be required for AGTR2 cell surface expression. Together with PTPN6, induces UBE2V2 expression upon angiotensin-II stimulation. Isoform 1 inhibits breast cancer cell proliferation, delays the progression of mitosis by prolonging metaphase and reduces tumor growth. This Homo sapiens (Human) protein is Microtubule-associated tumor suppressor 1 (MTUS1).